A 255-amino-acid polypeptide reads, in one-letter code: tRNA (guanine-N(1)-)-methyltransferase (255 aa).

S-adenosyl-L-methionine contacts are provided by residues Gly113 and Ile133–Leu138.

It belongs to the RNA methyltransferase TrmD family. As to quaternary structure, homodimer.

The protein resides in the cytoplasm. It catalyses the reaction guanosine(37) in tRNA + S-adenosyl-L-methionine = N(1)-methylguanosine(37) in tRNA + S-adenosyl-L-homocysteine + H(+). Specifically methylates guanosine-37 in various tRNAs. In Escherichia coli O81 (strain ED1a), this protein is tRNA (guanine-N(1)-)-methyltransferase.